Reading from the N-terminus, the 118-residue chain is Beta-2-microglobulin (118 aa).

The N-terminal stretch at 1 to 21 is a signal peptide; sequence MESRWGIVVIGLLCCVSWVEA. Residues 26–113 enclose the Ig-like C1-type domain; the sequence is PKIQVYTRSP…THNSVTKSVK (88 aa). A disulfide bridge connects residues cysteine 46 and cysteine 101.

It belongs to the beta-2-microglobulin family. As to quaternary structure, heterodimer of an alpha chain and a beta chain. Beta-2-microglobulin is the beta-chain of major histocompatibility complex class I molecules.

The protein localises to the secreted. In terms of biological role, component of the class I major histocompatibility complex (MHC). Involved in the presentation of peptide antigens to the immune system. The protein is Beta-2-microglobulin (B2M) of Tachyglossus aculeatus aculeatus (Southeast Australian short-beaked echidna).